The chain runs to 380 residues: Anhydro-N-acetylmuramic acid kinase (380 aa).

17-24 (GTSMDGAD) is an ATP binding site.

The protein belongs to the anhydro-N-acetylmuramic acid kinase family.

It catalyses the reaction 1,6-anhydro-N-acetyl-beta-muramate + ATP + H2O = N-acetyl-D-muramate 6-phosphate + ADP + H(+). The protein operates within amino-sugar metabolism; 1,6-anhydro-N-acetylmuramate degradation. It functions in the pathway cell wall biogenesis; peptidoglycan recycling. In terms of biological role, catalyzes the specific phosphorylation of 1,6-anhydro-N-acetylmuramic acid (anhMurNAc) with the simultaneous cleavage of the 1,6-anhydro ring, generating MurNAc-6-P. Is required for the utilization of anhMurNAc either imported from the medium or derived from its own cell wall murein, and thus plays a role in cell wall recycling. The protein is Anhydro-N-acetylmuramic acid kinase of Cupriavidus metallidurans (strain ATCC 43123 / DSM 2839 / NBRC 102507 / CH34) (Ralstonia metallidurans).